A 1272-amino-acid polypeptide reads, in one-letter code: Ubiquitin carboxyl-terminal hydrolase 2 (1272 aa).

Residues threonine 736–glutamine 1258 form the USP domain. Cysteine 745 acts as the Nucleophile in catalysis. The interval aspartate 884–proline 918 is disordered. Positions asparagine 902–aspartate 911 are enriched in acidic residues. Serine 907 bears the Phosphoserine mark. Histidine 1209 serves as the catalytic Proton acceptor.

It belongs to the peptidase C19 family. Forms a ternary complex with RSP5 and RUP1. Interacts with RSP5. Interacts with FZO1.

The catalysed reaction is Thiol-dependent hydrolysis of ester, thioester, amide, peptide and isopeptide bonds formed by the C-terminal Gly of ubiquitin (a 76-residue protein attached to proteins as an intracellular targeting signal).. In terms of biological role, has an ATP-independent isopeptidase activity, cleaving at the C-terminus of the ubiquitin moiety in natural or engineered linear fusion proteins, irrespective of their size or the presence of an N-terminal extension to ubiquitin. Hydrolyzes polyubiquitinated 'Lys-63' polyubiquitin chains in RPO21, producing mono-ubiquitinated RNA polymerase II. Removes ubiquitin chains that initiate proteolysis of FZO1 and inhibit mitochondrial fusion. This is Ubiquitin carboxyl-terminal hydrolase 2 (UBP2) from Saccharomyces cerevisiae (strain ATCC 204508 / S288c) (Baker's yeast).